The following is a 403-amino-acid chain: Argininosuccinate synthase (403 aa).

10–18 (AYSGGVDTS) contacts ATP. Position 89 (tyrosine 89) interacts with L-citrulline. Glycine 119 is a binding site for ATP. L-aspartate-binding residues include threonine 121, asparagine 125, and aspartate 126. Asparagine 125 serves as a coordination point for L-citrulline. Residues arginine 129, serine 177, serine 186, glutamate 262, and tyrosine 274 each coordinate L-citrulline.

It belongs to the argininosuccinate synthase family. Type 1 subfamily. As to quaternary structure, homotetramer.

The protein localises to the cytoplasm. The catalysed reaction is L-citrulline + L-aspartate + ATP = 2-(N(omega)-L-arginino)succinate + AMP + diphosphate + H(+). It participates in amino-acid biosynthesis; L-arginine biosynthesis; L-arginine from L-ornithine and carbamoyl phosphate: step 2/3. This Synechococcus sp. (strain JA-3-3Ab) (Cyanobacteria bacterium Yellowstone A-Prime) protein is Argininosuccinate synthase.